The primary structure comprises 102 residues: NADH-quinone oxidoreductase subunit K (102 aa).

3 helical membrane-spanning segments follow: residues 5 to 25 (LSHY…GIFL), 31 to 51 (IVIL…MVAF), and 65 to 85 (LFIL…LVVF).

Belongs to the complex I subunit 4L family. In terms of assembly, NDH-1 is composed of 14 different subunits. Subunits NuoA, H, J, K, L, M, N constitute the membrane sector of the complex.

It localises to the cell inner membrane. It carries out the reaction a quinone + NADH + 5 H(+)(in) = a quinol + NAD(+) + 4 H(+)(out). Functionally, NDH-1 shuttles electrons from NADH, via FMN and iron-sulfur (Fe-S) centers, to quinones in the respiratory chain. The immediate electron acceptor for the enzyme in this species is believed to be ubiquinone. Couples the redox reaction to proton translocation (for every two electrons transferred, four hydrogen ions are translocated across the cytoplasmic membrane), and thus conserves the redox energy in a proton gradient. This is NADH-quinone oxidoreductase subunit K from Rhizobium johnstonii (strain DSM 114642 / LMG 32736 / 3841) (Rhizobium leguminosarum bv. viciae).